Here is a 182-residue protein sequence, read N- to C-terminus: Probable RNA 2'-phosphotransferase (182 aa).

This sequence belongs to the KptA/TPT1 family.

Removes the 2'-phosphate from RNA via an intermediate in which the phosphate is ADP-ribosylated by NAD followed by a presumed transesterification to release the RNA and generate ADP-ribose 1''-2''-cyclic phosphate (APPR&gt;P). May function as an ADP-ribosylase. This Pseudomonas paraeruginosa (strain DSM 24068 / PA7) (Pseudomonas aeruginosa (strain PA7)) protein is Probable RNA 2'-phosphotransferase.